Consider the following 72-residue polypeptide: MSKEDAIEVMAVVIEPLPNAMFKVELENKHQVLAHVSGKMRKNFIRILPGDRVAVELSPYDLTRGRIVYRYK.

The S1-like domain occupies 1-72 (MSKEDAIEVM…TRGRIVYRYK (72 aa)).

Belongs to the IF-1 family. As to quaternary structure, component of the 30S ribosomal translation pre-initiation complex which assembles on the 30S ribosome in the order IF-2 and IF-3, IF-1 and N-formylmethionyl-tRNA(fMet); mRNA recruitment can occur at any time during PIC assembly.

The protein localises to the cytoplasm. In terms of biological role, one of the essential components for the initiation of protein synthesis. Stabilizes the binding of IF-2 and IF-3 on the 30S subunit to which N-formylmethionyl-tRNA(fMet) subsequently binds. Helps modulate mRNA selection, yielding the 30S pre-initiation complex (PIC). Upon addition of the 50S ribosomal subunit IF-1, IF-2 and IF-3 are released leaving the mature 70S translation initiation complex. In Koribacter versatilis (strain Ellin345), this protein is Translation initiation factor IF-1.